A 429-amino-acid polypeptide reads, in one-letter code: Acetylornithine aminotransferase (429 aa).

Pyridoxal 5'-phosphate contacts are provided by residues 126–127 (GA) and Phe160. Arg163 contacts N(2)-acetyl-L-ornithine. 251-254 (DEVQ) contributes to the pyridoxal 5'-phosphate binding site. Lys280 bears the N6-(pyridoxal phosphate)lysine mark. Ser307 contributes to the N(2)-acetyl-L-ornithine binding site. Thr308 is a binding site for pyridoxal 5'-phosphate.

It belongs to the class-III pyridoxal-phosphate-dependent aminotransferase family. ArgD subfamily. In terms of assembly, homodimer. Pyridoxal 5'-phosphate serves as cofactor.

Its subcellular location is the cytoplasm. The enzyme catalyses N(2)-acetyl-L-ornithine + 2-oxoglutarate = N-acetyl-L-glutamate 5-semialdehyde + L-glutamate. Its pathway is amino-acid biosynthesis; L-arginine biosynthesis; N(2)-acetyl-L-ornithine from L-glutamate: step 4/4. Its activity is regulated as follows. N-acetylornithine aminotransferase activity is stimulated by the addition of Mg(2+), Ca(2+) or Mn(2+), and inhibited by the addition of Zn(2+), Cu(2+), Co(2+) or Ni(2+). Functionally, catalyzes the reversible conversion of N-acetylornithine to N-acetylglutamate-5-semialdehyde. In vitro, also shows very low ornithine aminotransferase (OAT) and gamma-aminobutyrate aminotransferase (GABA-AT) activity, catalyzing the conversion of ornithine (Orn) to glutamate-5-semialdehyde and of gamma-aminobutyric acid (GABA) to succinate semialdehyde. It has been shown to function as a GABA-AT and contributes to closing the tricarboxylic acid cycle of Synechocystis sp. PCC6803 via the GABA shunt. However, the catalytic efficiency toward N-acetylornithine is 2500-fold and 10700-fold higher than that toward ornithine and gamma-aminobutyrate, respectively, indicating that the protein mainly functions as an N-acetylornithine aminotransferase. The polypeptide is Acetylornithine aminotransferase (Synechocystis sp. (strain ATCC 27184 / PCC 6803 / Kazusa)).